Reading from the N-terminus, the 415-residue chain is Putative serine/threonine-protein phosphatase 4 regulatory subunit 1-like (415 aa).

4 HEAT repeats span residues 86–124 (VMEI…SNFP), 163–202 (LLPR…TEKF), 203–241 (LIPK…RRTQ), and 242–280 (LFPL…RAGL). A compositionally biased stretch (low complexity) spans 301–318 (FASGSPAPSSGGNTSPAS). Residues 301-362 (FASGSPAPSS…GPAESPVESC (62 aa)) form a disordered region.

In terms of biological role, may be a regulatory subunit of serine/threonine-protein phosphatase 4. The protein is Putative serine/threonine-protein phosphatase 4 regulatory subunit 1-like (PPP4R1L) of Homo sapiens (Human).